A 952-amino-acid chain; its full sequence is Isoleucine--tRNA ligase (952 aa).

Positions Pro-60–His-70 match the 'HIGH' region motif. L-isoleucyl-5'-AMP is bound at residue Glu-562. Positions Lys-603–Ser-607 match the 'KMSKS' region motif. Lys-606 contributes to the ATP binding site. Residues Cys-921, Cys-924, Cys-941, and Cys-944 each contribute to the Zn(2+) site.

This sequence belongs to the class-I aminoacyl-tRNA synthetase family. IleS type 1 subfamily. As to quaternary structure, monomer. The cofactor is Zn(2+).

Its subcellular location is the cytoplasm. The catalysed reaction is tRNA(Ile) + L-isoleucine + ATP = L-isoleucyl-tRNA(Ile) + AMP + diphosphate. In terms of biological role, catalyzes the attachment of isoleucine to tRNA(Ile). As IleRS can inadvertently accommodate and process structurally similar amino acids such as valine, to avoid such errors it has two additional distinct tRNA(Ile)-dependent editing activities. One activity is designated as 'pretransfer' editing and involves the hydrolysis of activated Val-AMP. The other activity is designated 'posttransfer' editing and involves deacylation of mischarged Val-tRNA(Ile). This Microcystis aeruginosa (strain NIES-843 / IAM M-2473) protein is Isoleucine--tRNA ligase.